The following is a 983-amino-acid chain: Receptor-type tyrosine-protein phosphatase-like N (983 aa).

An N-terminal signal peptide occupies residues 1–40 (MRRPRRPGGPAGCGGSEGSGGLRLLVCLLLLSGRPGGCSA). Residues 41 to 137 (ISAHGCLFDR…HPRDRSGSVP (97 aa)) are RESP18 homology domain. Topologically, residues 41–579 (ISAHGCLFDR…RQAHGISPMR (539 aa)) are lumenal. A disulfide bond links Cys-59 and Cys-68. Residues 118–133 (RIPRLRPPEPHPRDRS) are compositionally biased toward basic and acidic residues. Disordered stretches follow at residues 118-179 (RIPR…SPLS), 293-330 (RARAPRLPEEGGSSRAEDSSEGHEEEVLGGHGEKSPPQ), and 399-420 (GDTADARPPTPLLPGHPTASST). The segment covering 148-158 (SQGNPTGSSPA) has biased composition (polar residues). Residues 307–326 (RAEDSSEGHEEEVLGGHGEK) are compositionally biased toward basic and acidic residues. 2 positions are modified to phosphoserine: Ser-311 and Ser-312. Residues 453 to 579 (SPLGQSQPTV…RQAHGISPMR (127 aa)) are sufficient for dimerization of proICA512. N-linked (GlcNAc...) asparagine glycans are attached at residues Asn-510 and Asn-528. The helical transmembrane segment at 580–604 (SLLLTLVALAGVAGLLVALAVALCM) threads the bilayer. Positions 605–736 (RHHSKQRDKE…PNTCATAQGE (132 aa)) are sufficient for dimerization of proICA512. The Cytoplasmic portion of the chain corresponds to 605-983 (RHHSKQRDKE…VNAILKALPQ (379 aa)). The segment at 648–684 (RAEGQPEPSRVSSVSSQFSDAAQASPSSHSSTPSWCE) is disordered. A compositionally biased stretch (low complexity) spans 652–681 (QPEPSRVSSVSSQFSDAAQASPSSHSSTPS). Positions 713–973 (LAKEWQALCA…EFALTAVAEE (261 aa)) constitute a Tyrosine-protein phosphatase domain. Residue Lys-758 forms a Glycyl lysine isopeptide (Lys-Gly) (interchain with G-Cter in SUMO) linkage.

Belongs to the protein-tyrosine phosphatase family. Receptor class 8 subfamily. Homodimer; shown for the unprocessed protein (proICA512) in the endoplasmic reticulum and resolved during protein maturation as ICA512-TMF seems to be predominantly monomeric in secretory granules; however, ICA512-CCF interacts with ICA512-TMF disrupting the ICA512-TMF:SNTB2 complex. The isolated lumenal RESP18 homology domain has been shown to form disulfide-linked homooligomers. Interacts (via cytoplasmic domain) with phosphorylated SNTB2; this protects PTPRN against cleavage by CAPN1 to produce ICA512-CCF. Dephosphorylation of SNTB2 upon insulin stimulation disrupts the interaction and results in PTPRN cleavage. Interacts with SNX19. ICA512-CCF interacts with PIAS4; in the nucleus. Interacts with STAT5B (phosphorylated); down-regulated by ICA512-CCF sumoylation; ICA512-CCF prevents STAT5B dephosphorylation; ICA512-CCF mediates interaction of STAT5B with PIAS4. Interacts (via RESP18 homology domain) with insulin and proinsulin. Interacts with PTPRN2, PTPRA and PTPRE. Subject to proteolytic cleavage at multiple sites. Subject to cleavage on a pair of basic residues. Following exocytosis of secretory granules in pancreatic beta-cells ICA512-TMF located in the plasma-membrane is cleaved by mu-type calpain CPN1 to yield ICA512-CCF. Post-translationally, N-glycosylated. In terms of processing, O-glycosylated. Sumoylated at two sites including Lys-758. Sumoylation decreases interaction with STAT5. In terms of tissue distribution, detected in pancreas islets. Detected in pancreas alpha, beta and delta cells, and in chromaffin cells in the adrenal medulla. Detected in amygdala, hypothalamus, autonomous nerve fibers and ganglia, especially at synaptic contacts. Detected in pituitary (at protein level). Detected in brain, specifically in cerebral cortex, diencephalon and brain stem.

It is found in the membrane. The protein resides in the cytoplasmic vesicle. The protein localises to the secretory vesicle membrane. It localises to the perikaryon. Its subcellular location is the cell projection. It is found in the axon. The protein resides in the synapse. The protein localises to the cell membrane. It localises to the endosome. Its subcellular location is the nucleus. Plays a role in vesicle-mediated secretory processes. Required for normal accumulation of secretory vesicles in hippocampus, pituitary and pancreatic islets. Required for the accumulation of normal levels of insulin-containing vesicles and preventing their degradation. Plays a role in insulin secretion in response to glucose stimuli. Required for normal accumulation of the neurotransmitters norepinephrine, dopamine and serotonin in the brain. In females, but not in males, required for normal accumulation and secretion of pituitary hormones, such as luteinizing hormone (LH) and follicle-stimulating hormone (FSH). Required to maintain normal levels of renin expression and renin release. Seems to lack intrinsic enzyme activity. Its function is as follows. ICA512-TMF regulates dynamics and exocytosis of insulin secretory granules (SGs); binding of ICA512-TMF to SNTB2/beta-2-syntrophin is proposed to restrain SGs mobility and exocytosis by tethering them to the actin cytoskeleton depending on UTRN; the function is inhibited by cytoplasmic ICA512-CFF dimerizing with ICA512-TMF and displacing SNTB2. In terms of biological role, ICA512-CCF translocated to the nucleus promotes expression of insulin and other granule-related genes; the function implicates binding to and regulating activity of STAT5B probably by preventing its dephosphorylation and potentially by inducing its sumoylation by recruiting PIAS4. Enhances pancreatic beta-cell proliferation by converging with signaling by STAT5B and STAT3. ICA512-CCF located in the cytoplasm regulates dynamics and exocytosis of insulin secretory granules (SGs) by dimerizing with ICA512-TMF and displacing SNTB2 thus enhancing SGs mobility and exocytosis. The polypeptide is Receptor-type tyrosine-protein phosphatase-like N (Ptprn) (Rattus norvegicus (Rat)).